Here is a 79-residue protein sequence, read N- to C-terminus: Serine rich endogenous peptide 2 (79 aa).

Residues 1–19 (MANNLGLVILLLVIVLVSC) form the signal peptide. The disordered stretch occupies residues 25-79 (CALASPQKSRPSSEWRRKLIPVRSSRSPRSPSFAPKKPPPPPPSPPLSPSSPPSN). The SCOOP motif signature appears at 45–57 (PVRSSRSPRSPSF). The segment covering 45-59 (PVRSSRSPRSPSFAP) has biased composition (low complexity). Positions 49–51 (SRS) match the SxS motif essential for MIK2 binding motif. A compositionally biased stretch (pro residues) spans 60 to 79 (KKPPPPPPSPPLSPSSPPSN).

This sequence belongs to the serine rich endogenous peptide (SCOOP) phytocytokine family. As to quaternary structure, interacts with MIK2 (via extracellular leucine-rich repeat domain); this interaction triggers the formation of complex between MIK2 and the BAK1/SERK3 and SERK4 coreceptors, and subsequent BAK1 activation by phosphorylation.

The protein resides in the cell membrane. Its subcellular location is the secreted. It localises to the extracellular space. It is found in the apoplast. Functionally, brassicaceae-specific phytocytokine (plant endogenous peptide released into the apoplast) perceived by MIK2 in a BAK1/SERK3 and SERK4 coreceptors-dependent manner, that modulates various physiological and antimicrobial processes including growth prevention and reactive oxygen species (ROS) response regulation. This chain is Serine rich endogenous peptide 2, found in Arabidopsis thaliana (Mouse-ear cress).